Reading from the N-terminus, the 362-residue chain is Probable dual-specificity RNA methyltransferase RlmN (362 aa).

E105 (proton acceptor) is an active-site residue. One can recognise a Radical SAM core domain in the interval 111–344; the sequence is HEYGNSICVT…VTIRREQGHD (234 aa). C118 and C349 are oxidised to a cystine. [4Fe-4S] cluster-binding residues include C125, C129, and C132. Residues 175–176, S207, 230–232, and N306 contribute to the S-adenosyl-L-methionine site; these read GE and SLH. C349 serves as the catalytic S-methylcysteine intermediate.

It belongs to the radical SAM superfamily. RlmN family. [4Fe-4S] cluster is required as a cofactor.

It localises to the cytoplasm. The catalysed reaction is adenosine(2503) in 23S rRNA + 2 reduced [2Fe-2S]-[ferredoxin] + 2 S-adenosyl-L-methionine = 2-methyladenosine(2503) in 23S rRNA + 5'-deoxyadenosine + L-methionine + 2 oxidized [2Fe-2S]-[ferredoxin] + S-adenosyl-L-homocysteine. It catalyses the reaction adenosine(37) in tRNA + 2 reduced [2Fe-2S]-[ferredoxin] + 2 S-adenosyl-L-methionine = 2-methyladenosine(37) in tRNA + 5'-deoxyadenosine + L-methionine + 2 oxidized [2Fe-2S]-[ferredoxin] + S-adenosyl-L-homocysteine. In terms of biological role, specifically methylates position 2 of adenine 2503 in 23S rRNA and position 2 of adenine 37 in tRNAs. This chain is Probable dual-specificity RNA methyltransferase RlmN, found in Bacillus cereus (strain ATCC 14579 / DSM 31 / CCUG 7414 / JCM 2152 / NBRC 15305 / NCIMB 9373 / NCTC 2599 / NRRL B-3711).